Here is a 320-residue protein sequence, read N- to C-terminus: Malate dehydrogenase (320 aa).

NAD(+)-binding positions include 10 to 15 (GSGMIG) and Asp-34. Substrate is bound by residues Arg-83 and Arg-89. Residues Asn-96 and 119–121 (ITN) contribute to the NAD(+) site. Positions 121 and 152 each coordinate substrate. Catalysis depends on His-176, which acts as the Proton acceptor.

Belongs to the LDH/MDH superfamily. MDH type 3 family.

The enzyme catalyses (S)-malate + NAD(+) = oxaloacetate + NADH + H(+). Catalyzes the reversible oxidation of malate to oxaloacetate. In Rhizobium rhizogenes (strain K84 / ATCC BAA-868) (Agrobacterium radiobacter), this protein is Malate dehydrogenase.